The following is a 191-amino-acid chain: Peptidyl-tRNA hydrolase (191 aa).

Residue Tyr-14 participates in tRNA binding. His-19 functions as the Proton acceptor in the catalytic mechanism. 3 residues coordinate tRNA: Tyr-64, Asn-66, and Asn-112.

This sequence belongs to the PTH family. Monomer.

It is found in the cytoplasm. It catalyses the reaction an N-acyl-L-alpha-aminoacyl-tRNA + H2O = an N-acyl-L-amino acid + a tRNA + H(+). In terms of biological role, hydrolyzes ribosome-free peptidyl-tRNAs (with 1 or more amino acids incorporated), which drop off the ribosome during protein synthesis, or as a result of ribosome stalling. Functionally, catalyzes the release of premature peptidyl moieties from peptidyl-tRNA molecules trapped in stalled 50S ribosomal subunits, and thus maintains levels of free tRNAs and 50S ribosomes. The polypeptide is Peptidyl-tRNA hydrolase (Lachnoclostridium phytofermentans (strain ATCC 700394 / DSM 18823 / ISDg) (Clostridium phytofermentans)).